The sequence spans 109 residues: Large ribosomal subunit protein uL22 (109 aa).

It belongs to the universal ribosomal protein uL22 family. Part of the 50S ribosomal subunit.

Its function is as follows. This protein binds specifically to 23S rRNA; its binding is stimulated by other ribosomal proteins, e.g. L4, L17, and L20. It is important during the early stages of 50S assembly. It makes multiple contacts with different domains of the 23S rRNA in the assembled 50S subunit and ribosome. In terms of biological role, the globular domain of the protein is located near the polypeptide exit tunnel on the outside of the subunit, while an extended beta-hairpin is found that lines the wall of the exit tunnel in the center of the 70S ribosome. This Bordetella avium (strain 197N) protein is Large ribosomal subunit protein uL22.